A 198-amino-acid polypeptide reads, in one-letter code: Suppressor of cytokine signaling 2 (198 aa).

Positions 1–29 (MTLRCLEPSGNGADRTRSQWGTAGLPEEQ) are disordered. Positions 1-75 (MTLRCLEPSG…PEGTFLIRDS (75 aa)) are interaction with AREL1. Ser-30 carries the post-translational modification Phosphoserine. One can recognise an SH2 domain in the interval 48 to 156 (WYWGSMTVNE…TVHLYLTKPL (109 aa)). Ser-52 carries the phosphoserine; by PKC modification. Residues 151 to 197 (YLTKPLYTSAPTLQHFCRLAINKCTGTIWGLPLPTRLKDYLEEYKFQ) enclose the SOCS box domain. Lys-173 participates in a covalent cross-link: Glycyl lysine isopeptide (Lys-Gly) (interchain with G-Cter in ubiquitin).

In terms of assembly, substrate-recognition component of the ECS(SOCS2) complex, composed of SOCS2, CUL5, ELOB, ELOC and RNF7/RBX2. Interacts with IGF1R. Interacts with DCUN1D1. In terms of processing, ubiquitinated; mediated by AREL1 and leading to its subsequent proteasomal degradation. Ubiquitination is dependent on phosphorylation at Ser-52, by PKC and is stimulated by LPS. Post-translationally, phosphorylation at Ser-52 by PKC facilitates its ubiquitination and proteasomal degradation. Expressed primarily in the testis, some expression in liver and lung.

The protein localises to the cytoplasm. The protein operates within protein modification; protein ubiquitination. In terms of biological role, substrate-recognition component of a cullin-5-RING E3 ubiquitin-protein ligase complex (ECS complex, also named CRL5 complex), which mediates the ubiquitination and subsequent proteasomal degradation of target proteins, such as EPOR and GHR. Specifically recognizes and binds phosphorylated proteins via its SH2 domain, promoting their ubiquitination. The ECS(SOCS2) complex acts as a key regulator of growth hormone receptor (GHR) levels by mediating ubiquitination and degradation of GHR, following GHR phosphorylation by JAK2. The ECS(SOCS2) also catalyzes ubiquitination and degradation of JAK2-phosphorylated EPOR. The sequence is that of Suppressor of cytokine signaling 2 from Mus musculus (Mouse).